A 276-amino-acid chain; its full sequence is NH(3)-dependent NAD(+) synthetase (276 aa).

An ATP-binding site is contributed by 43–50; sequence GISGGVDS. Asp-49 provides a ligand contact to Mg(2+). Arg-146 provides a ligand contact to deamido-NAD(+). Position 166 (Thr-166) interacts with ATP. Glu-171 is a Mg(2+) binding site. Residues Lys-179 and Asp-186 each contribute to the deamido-NAD(+) site. The ATP site is built by Lys-195 and Thr-217. 266–267 is a deamido-NAD(+) binding site; it reads HK.

Belongs to the NAD synthetase family. As to quaternary structure, homodimer.

It carries out the reaction deamido-NAD(+) + NH4(+) + ATP = AMP + diphosphate + NAD(+) + H(+). The protein operates within cofactor biosynthesis; NAD(+) biosynthesis; NAD(+) from deamido-NAD(+) (ammonia route): step 1/1. Its function is as follows. Catalyzes the ATP-dependent amidation of deamido-NAD to form NAD. Uses ammonia as a nitrogen source. This chain is NH(3)-dependent NAD(+) synthetase, found in Shewanella oneidensis (strain ATCC 700550 / JCM 31522 / CIP 106686 / LMG 19005 / NCIMB 14063 / MR-1).